The following is a 262-amino-acid chain: Indole-3-glycerol phosphate synthase (262 aa).

The protein belongs to the TrpC family.

The catalysed reaction is 1-(2-carboxyphenylamino)-1-deoxy-D-ribulose 5-phosphate + H(+) = (1S,2R)-1-C-(indol-3-yl)glycerol 3-phosphate + CO2 + H2O. The protein operates within amino-acid biosynthesis; L-tryptophan biosynthesis; L-tryptophan from chorismate: step 4/5. The chain is Indole-3-glycerol phosphate synthase from Thiobacillus denitrificans (strain ATCC 25259 / T1).